The sequence spans 373 residues: Carnosine N-methyltransferase (373 aa).

S-adenosyl-L-methionine contacts are provided by Gln-110, Arg-113, Gly-154, Glu-175, Asp-242, Phe-243, and Cys-262. Asp-266 is a carnosine binding site. An S-adenosyl-L-methionine-binding site is contributed by Tyr-274. 2 residues coordinate carnosine: His-297 and Tyr-356.

This sequence belongs to the carnosine N-methyltransferase family.

It localises to the cytoplasm. Its subcellular location is the nucleus. The enzyme catalyses carnosine + S-adenosyl-L-methionine = anserine + S-adenosyl-L-homocysteine + H(+). N-methyltransferase that mediates the formation of anserine (beta-alanyl-N(Pi)-methyl-L-histidine) from carnosine. Also methylates other L-histidine-containing di- and tripeptides such as Gly-Gly-His, Gly-His and homocarnosine (GABA-His). In Schizosaccharomyces pombe (strain 972 / ATCC 24843) (Fission yeast), this protein is Carnosine N-methyltransferase.